Consider the following 546-residue polypeptide: Cysteine--tRNA ligase (546 aa).

C57 provides a ligand contact to Zn(2+). The 'HIGH' region signature appears at 59-69; that stretch reads ATVQSSPHIGH. The segment at 211 to 236 is disordered; that stretch reads PSVDATGADKYNPVDPADASPDKHDP. Positions 270, 295, and 299 each coordinate Zn(2+). Positions 326–330 match the 'KMSKS' region motif; sequence KMSKS. Residue K329 participates in ATP binding.

This sequence belongs to the class-I aminoacyl-tRNA synthetase family. In terms of assembly, monomer. Zn(2+) is required as a cofactor.

It is found in the cytoplasm. It carries out the reaction tRNA(Cys) + L-cysteine + ATP = L-cysteinyl-tRNA(Cys) + AMP + diphosphate. The chain is Cysteine--tRNA ligase from Bifidobacterium longum (strain NCC 2705).